The chain runs to 210 residues: Somatotropin-1 (210 aa).

An N-terminal signal peptide occupies residues 1 to 22; the sequence is MGQVFLLMPVLLASCFLSQGAA. A Zn(2+)-binding site is contributed by histidine 38. Cysteine 71 and cysteine 183 are oxidised to a cystine. Residue glutamate 192 participates in Zn(2+) binding. A disulfide bond links cysteine 200 and cysteine 208.

The protein belongs to the somatotropin/prolactin family.

The protein localises to the secreted. Growth hormone plays an important role in growth control and is involved in the regulation of several anabolic processes. Implicated as an osmoregulatory substance important for seawater adaptation. This Oncorhynchus nerka (Sockeye salmon) protein is Somatotropin-1 (gh1).